Here is a 294-residue protein sequence, read N- to C-terminus: NAD kinase (294 aa).

Catalysis depends on aspartate 72, which acts as the Proton acceptor. Residues 72-73 (DG), 146-147 (ND), arginine 157, arginine 174, aspartate 176, 187-192 (TAYSLS), and glutamine 247 contribute to the NAD(+) site.

Belongs to the NAD kinase family. It depends on a divalent metal cation as a cofactor.

It localises to the cytoplasm. It carries out the reaction NAD(+) + ATP = ADP + NADP(+) + H(+). In terms of biological role, involved in the regulation of the intracellular balance of NAD and NADP, and is a key enzyme in the biosynthesis of NADP. Catalyzes specifically the phosphorylation on 2'-hydroxyl of the adenosine moiety of NAD to yield NADP. This Marinobacter nauticus (strain ATCC 700491 / DSM 11845 / VT8) (Marinobacter aquaeolei) protein is NAD kinase.